The sequence spans 374 residues: Serpin B8 (374 aa).

It belongs to the serpin family. Ov-serpin subfamily.

The protein localises to the cytoplasm. Functionally, has an important role in epithelial desmosome-mediated cell-cell adhesion. The chain is Serpin B8 (SERPINB8) from Homo sapiens (Human).